Here is a 149-residue protein sequence, read N- to C-terminus: 3-hydroxyacyl-[acyl-carrier-protein] dehydratase FabZ (149 aa).

The active site involves His47.

It belongs to the thioester dehydratase family. FabZ subfamily.

The protein localises to the cytoplasm. It carries out the reaction a (3R)-hydroxyacyl-[ACP] = a (2E)-enoyl-[ACP] + H2O. Its function is as follows. Involved in unsaturated fatty acids biosynthesis. Catalyzes the dehydration of short chain beta-hydroxyacyl-ACPs and long chain saturated and unsaturated beta-hydroxyacyl-ACPs. The protein is 3-hydroxyacyl-[acyl-carrier-protein] dehydratase FabZ of Thioalkalivibrio sulfidiphilus (strain HL-EbGR7).